A 293-amino-acid chain; its full sequence is Phosphatidylserine decarboxylase proenzyme (293 aa).

Residues Asp90, His147, and Ser254 each act as charge relay system; for autoendoproteolytic cleavage activity in the active site. The active-site Schiff-base intermediate with substrate; via pyruvic acid; for decarboxylase activity is the Ser254. Ser254 is modified (pyruvic acid (Ser); by autocatalysis).

It belongs to the phosphatidylserine decarboxylase family. PSD-B subfamily. Prokaryotic type I sub-subfamily. In terms of assembly, heterodimer of a large membrane-associated beta subunit and a small pyruvoyl-containing alpha subunit. Pyruvate serves as cofactor. In terms of processing, is synthesized initially as an inactive proenzyme. Formation of the active enzyme involves a self-maturation process in which the active site pyruvoyl group is generated from an internal serine residue via an autocatalytic post-translational modification. Two non-identical subunits are generated from the proenzyme in this reaction, and the pyruvate is formed at the N-terminus of the alpha chain, which is derived from the carboxyl end of the proenzyme. The autoendoproteolytic cleavage occurs by a canonical serine protease mechanism, in which the side chain hydroxyl group of the serine supplies its oxygen atom to form the C-terminus of the beta chain, while the remainder of the serine residue undergoes an oxidative deamination to produce ammonia and the pyruvoyl prosthetic group on the alpha chain. During this reaction, the Ser that is part of the protease active site of the proenzyme becomes the pyruvoyl prosthetic group, which constitutes an essential element of the active site of the mature decarboxylase.

Its subcellular location is the cell membrane. The catalysed reaction is a 1,2-diacyl-sn-glycero-3-phospho-L-serine + H(+) = a 1,2-diacyl-sn-glycero-3-phosphoethanolamine + CO2. Its pathway is phospholipid metabolism; phosphatidylethanolamine biosynthesis; phosphatidylethanolamine from CDP-diacylglycerol: step 2/2. Its function is as follows. Catalyzes the formation of phosphatidylethanolamine (PtdEtn) from phosphatidylserine (PtdSer). This is Phosphatidylserine decarboxylase proenzyme from Yersinia pseudotuberculosis serotype O:1b (strain IP 31758).